A 324-amino-acid chain; its full sequence is G patch domain-containing protein 4 (324 aa).

Disordered regions lie at residues 1 to 30 (MSAS…GKGL) and 123 to 324 (LSGG…NKSE). A G-patch domain is found at 11 to 57 (GMKFAEEQMHKHGWKEGKGLGRRENGICEAIKVKVKCDHAGVGHNSA). Residues 14-30 (FAEEQMHKHGWKEGKGL) are compositionally biased toward basic and acidic residues. The segment covering 131-141 (KEPSSSESSDS) has biased composition (low complexity). The span at 186-215 (SRLEEQEREFLAKYGKKEQKNKERDEKLER) shows a compositional bias: basic and acidic residues. Residues 244-253 (HKKKKKKRKR) are compositionally biased toward basic residues. Over residues 254–270 (ADSERKEESQENGHEEE) the composition is skewed to basic and acidic residues. Residues 296 to 309 (PSTQEEQPTESSDF) are compositionally biased toward polar residues. Positions 312-324 (KPKKKKKKKNKSE) are enriched in basic residues.

The polypeptide is G patch domain-containing protein 4 (gpatch4) (Xenopus laevis (African clawed frog)).